The chain runs to 326 residues: DNA repair protein XRCC4 (326 aa).

Positions 1–212 (MERKVSRIYL…QLEESTKPER (212 aa)) are interaction with IFFO1. Ser-53 is subject to Phosphoserine; by PRKDC. Coiled-coil stretches lie at residues 131 to 165 (LDTI…FEKC) and 185 to 209 (NEKK…ESTK). Residues 180 to 211 (FILVLNEKKTKIRSLHKLLNEVQQLEESTKPE) form an interaction with LIG4 region. Ser-193 bears the Phosphoserine; by PRKDC mark. The interval 203–326 (QLEESTKPER…RNSSPEDLFD (124 aa)) is disordered. Residues 206–226 (ESTKPERENPCSDKTPEEHGL) show a composition bias toward basic and acidic residues. Residue Tyr-227 is modified to Phosphotyrosine. Ser-230 carries the post-translational modification Phosphoserine. A Phosphothreonine modification is found at Thr-231. Position 235 is a phosphoserine (Ser-235). Position 244 is a phosphothreonine (Thr-244). Phosphoserine is present on Ser-250. Residue Ser-254 is modified to Phosphoserine; by PRKDC. A Nuclear localization signal motif is present at residues 264–269 (RKRRHR). Residue Lys-290 forms a Glycyl lysine isopeptide (Lys-Gly) (interchain with G-Cter in ubiquitin) linkage. Position 295 is a phosphoserine; by PRKDC (Ser-295). Ser-296 carries the post-translational modification Phosphoserine. Ser-307 and Ser-312 each carry phosphoserine; by PRKDC. The segment covering 307 to 326 (SAENMSLETLRNSSPEDLFD) has biased composition (polar residues). Thr-315 carries the post-translational modification Phosphothreonine; by PRKDC. Phosphoserine; by PRKDC occurs at positions 319 and 320.

It belongs to the XRCC4-XLF family. XRCC4 subfamily. Homodimer and homotetramer in solution. Interacts with NHEJ1/XLF; the interaction is direct and is mediated via a head-to-head interaction between N-terminal head regions. Interacts with LIG4; the LIG4-XRCC4 subcomplex has a 1:2 stoichiometry and XRCC4 is required for LIG4 stability. Component of the core long-range non-homologous end joining (NHEJ) complex (also named DNA-PK complex) composed of PRKDC, LIG4, XRCC4, XRCC6/Ku70, XRCC5/Ku86 and NHEJ1/XLF. Additional component of the NHEJ complex includes PAXX. Following autophosphorylation, PRKDC dissociates from DNA, leading to formation of the short-range NHEJ complex, composed of LIG4, XRCC4, XRCC6/Ku70, XRCC5/Ku86 and NHEJ1/XLF. Interacts with PRKDC; the interaction is direct. Interacts with XRCC6/Ku70; the interaction is direct. Interacts with APTX and APLF. Forms a heterotetramer with IFFO1; the interaction involves LIG4-free XRCC4 and leads to the relocalization of IFFO1 to the sites of DNA damage. Interacts with PNKP; mainly interacts with PNKP when phosphorylated at Thr-231, but is also able to interact at much lower level with PNKP when not unphosphorylated. Interacts with POLL (DNA polymerase lambda). As to quaternary structure, interacts with XKR4; interacts with the processed form of XKR4, which is cleaved by caspase. Post-translationally, phosphorylated by PRKDC at the C-terminus in response to DNA damage; Ser-254 and Ser-312 constitute the main phosphorylation sites. Phosphorylation by PRKDC at the C-terminus of XRCC4 and NHEJ1/XLF are highly redundant and regulate ability of the XRCC4-NHEJ1/XLF subcomplex to bridge DNA. Phosphorylation by PRKDC does not prevent interaction with NHEJ1/XLF but disrupts ability to bridge DNA and promotes detachment from DNA. Phosphorylation at Ser-319 and Ser-320 by PRKDC promotes recognition by the SCF(FBXW7) complex and subsequent ubiquitination via 'Lys-63'-linked ubiquitin. Phosphorylation at Thr-231 by CK2 promotes interaction with PNKP; regulating PNKP activity and localization to DNA damage sites. Phosphorylation by CK2 promotes interaction with APTX. Ubiquitinated at Lys-290 by the SCF(FBXW7) complex via 'Lys-63'-linked ubiquitination, thereby promoting double-strand break repair: the SCF(FBXW7) complex specifically recognizes XRCC4 when phosphorylated at Ser-319 and Ser-320 by PRKDC, and 'Lys-63'-linked ubiquitination facilitates DNA non-homologous end joining (NHEJ) by enhancing association with XRCC5/Ku80 and XRCC6/Ku70. Monoubiquitinated. In terms of processing, undergoes proteolytic processing by caspase-3 (CASP3). This generates the protein XRCC4, C-terminus (XRCC4/C), which translocates to the cytoplasm and activates phospholipid scramblase activity of XKR4, thereby promoting phosphatidylserine exposure on apoptotic cell surface.

The protein localises to the nucleus. Its subcellular location is the chromosome. It is found in the cytoplasm. Functionally, DNA non-homologous end joining (NHEJ) core factor, required for double-strand break repair and V(D)J recombination. Acts as a scaffold protein that regulates recruitment of other proteins to DNA double-strand breaks (DSBs). Associates with NHEJ1/XLF to form alternating helical filaments that bridge DNA and act like a bandage, holding together the broken DNA until it is repaired. The XRCC4-NHEJ1/XLF subcomplex binds to the DNA fragments of a DSB in a highly diffusive manner and robustly bridges two independent DNA molecules, holding the broken DNA fragments in close proximity to one other. The mobility of the bridges ensures that the ends remain accessible for further processing by other repair factors. Plays a key role in the NHEJ ligation step of the broken DNA during DSB repair via direct interaction with DNA ligase IV (LIG4): the LIG4-XRCC4 subcomplex reseals the DNA breaks after the gap filling is completed. XRCC4 stabilizes LIG4, regulates its subcellular localization and enhances LIG4's joining activity. Binding of the LIG4-XRCC4 subcomplex to DNA ends is dependent on the assembly of the DNA-dependent protein kinase complex DNA-PK to these DNA ends. Promotes displacement of PNKP from processed strand break termini. Acts as an activator of the phospholipid scramblase activity of XKR4. This form, which is generated upon caspase-3 (CASP3) cleavage, translocates into the cytoplasm and interacts with XKR4, thereby promoting phosphatidylserine scramblase activity of XKR4 and leading to phosphatidylserine exposure on apoptotic cell surface. This is DNA repair protein XRCC4 from Mus musculus (Mouse).